A 355-amino-acid chain; its full sequence is Chorismate synthase (355 aa).

Residue Arg48 participates in NADP(+) binding. Residues 125–127, 239–240, Gly280, 295–299, and Arg321 contribute to the FMN site; these read RSS, NA, and KPVAT.

The protein belongs to the chorismate synthase family. As to quaternary structure, homotetramer. The cofactor is FMNH2.

It carries out the reaction 5-O-(1-carboxyvinyl)-3-phosphoshikimate = chorismate + phosphate. It functions in the pathway metabolic intermediate biosynthesis; chorismate biosynthesis; chorismate from D-erythrose 4-phosphate and phosphoenolpyruvate: step 7/7. Catalyzes the anti-1,4-elimination of the C-3 phosphate and the C-6 proR hydrogen from 5-enolpyruvylshikimate-3-phosphate (EPSP) to yield chorismate, which is the branch point compound that serves as the starting substrate for the three terminal pathways of aromatic amino acid biosynthesis. This reaction introduces a second double bond into the aromatic ring system. The chain is Chorismate synthase from Flavobacterium psychrophilum (strain ATCC 49511 / DSM 21280 / CIP 103535 / JIP02/86).